The sequence spans 228 residues: Octanoyltransferase (228 aa).

The BPL/LPL catalytic domain occupies 30 to 214; sequence KKIGDTLLLL…YFGKVFGKSL (185 aa). Residues 75-82, 144-146, and 157-159 contribute to the substrate site; these read RGGDVTYH, AIG, and GFA. Cysteine 175 acts as the Acyl-thioester intermediate in catalysis.

This sequence belongs to the LipB family.

The protein resides in the cytoplasm. It catalyses the reaction octanoyl-[ACP] + L-lysyl-[protein] = N(6)-octanoyl-L-lysyl-[protein] + holo-[ACP] + H(+). It functions in the pathway protein modification; protein lipoylation via endogenous pathway; protein N(6)-(lipoyl)lysine from octanoyl-[acyl-carrier-protein]: step 1/2. Its function is as follows. Catalyzes the transfer of endogenously produced octanoic acid from octanoyl-acyl-carrier-protein onto the lipoyl domains of lipoate-dependent enzymes. Lipoyl-ACP can also act as a substrate although octanoyl-ACP is likely to be the physiological substrate. This chain is Octanoyltransferase, found in Caldicellulosiruptor bescii (strain ATCC BAA-1888 / DSM 6725 / KCTC 15123 / Z-1320) (Anaerocellum thermophilum).